Here is a 333-residue protein sequence, read N- to C-terminus: Nucleoid-associated protein HAPS_0704 (333 aa).

This sequence belongs to the YejK family.

The protein resides in the cytoplasm. It is found in the nucleoid. The chain is Nucleoid-associated protein HAPS_0704 from Glaesserella parasuis serovar 5 (strain SH0165) (Haemophilus parasuis).